The primary structure comprises 488 residues: Protein DETOXIFICATION 35 (488 aa).

12 helical membrane passes run 38–58, 73–93, 121–141, 150–170, 187–207, 218–238, 262–282, 296–316, 336–356, 379–401, 408–428, and 439–459; these read LWMI…VSSV, AVSI…LGMG, IILF…TPVL, IAVP…SLAF, IAWI…LFII, LAFN…VIGW, IASA…IVLT, SICM…NAAI, VYVT…AIII, AYLL…VAVG, VAYI…YLLG, and WSGM…VLYK.

This sequence belongs to the multi antimicrobial extrusion (MATE) (TC 2.A.66.1) family. In terms of tissue distribution, highly expressed in inflorescence tissues, especially in floral epidermal guard cells including those of the anthers, stigma, siliques and nectaries. Also detected in the meristematic zone of the root apex and in the elongation zone through to the fully expanded cells of the differentiation zone.

It is found in the vacuole membrane. Functionally, multidrug and toxin efflux transporter involved in flavonoid metabolism. Required for proper reproductive development. The chain is Protein DETOXIFICATION 35 from Arabidopsis thaliana (Mouse-ear cress).